The primary structure comprises 174 residues: RNA pyrophosphohydrolase (174 aa).

In terms of domain architecture, Nudix hydrolase spans 6 to 149; that stretch reads GFRANVGIII…KRDVYRKVMK (144 aa). The Nudix box signature appears at 38-59; the sequence is GGVDDGETAEEAMYRELYEEVG.

It belongs to the Nudix hydrolase family. RppH subfamily. A divalent metal cation is required as a cofactor.

Accelerates the degradation of transcripts by removing pyrophosphate from the 5'-end of triphosphorylated RNA, leading to a more labile monophosphorylated state that can stimulate subsequent ribonuclease cleavage. The polypeptide is RNA pyrophosphohydrolase (Shewanella baltica (strain OS223)).